The sequence spans 147 residues: Hemoglobin subunit gamma-1 (147 aa).

G2 carries the N-acetylglycine; in form Hb F1 modification. The region spanning 3 to 147 is the Globin domain; that stretch reads HFTEEDKATI…VASALSSRYH (145 aa). The residue at position 13 (T13) is a Phosphothreonine. Phosphoserine occurs at positions 45, 51, and 53. K60 is subject to N6-acetyllysine. H64 is a heme b binding site. The residue at position 83 (K83) is an N6-acetyllysine. Heme b is bound at residue H93. An S-nitrosocysteine modification is found at C94. Residue S140 is modified to Phosphoserine.

Belongs to the globin family. In terms of assembly, heterotetramer of two alpha chains and two gamma chains in fetal hemoglobin (Hb F). In the case of deletions affecting one or more of the alpha chains, the excess gamma chains form homotetramers that exhibit neither Bohr effect nor heme-heme cooperativity (hemoglobin Bart's). Acetylation of Gly-2 converts Hb F to the minor Hb F1. In terms of tissue distribution, red blood cells.

Gamma chains make up the fetal hemoglobin F, in combination with alpha chains. In Homo sapiens (Human), this protein is Hemoglobin subunit gamma-1 (HBG1).